A 503-amino-acid polypeptide reads, in one-letter code: Potassium voltage-gated channel subfamily V member 1 (503 aa).

Disordered stretches follow at residues 1–20 (MDLS…DSGS) and 171–192 (KKDT…QGPC). The Cytoplasmic portion of the chain corresponds to 3–213 (LSPRNRPLLD…EKPGSSTAAR (211 aa)). The span at 10–20 (LLDSSSLDSGS) shows a compositional bias: low complexity. Positions 171 to 184 (KKDTDDQESQHESE) are enriched in basic and acidic residues. Residues 214-234 (IFGVISIIFVAVSIVNMALMS) traverse the membrane as a helical segment. The Extracellular portion of the chain corresponds to 235-241 (AELSWLN). The helical transmembrane segment at 242–262 (LQLLEILEYVCISWFTGEFIL) threads the bilayer. The Cytoplasmic segment spans residues 263–279 (RFLCVKDRCHFLRKVPN). Residues 280-300 (IIDLLAILPFYITLLVESLSG) form a helical membrane-spanning segment. The Extracellular portion of the chain corresponds to 301–312 (SHTTQELENVGR). The helical; Voltage-sensor transmembrane segment at 313–334 (LVQVLRLLRALRMLKLGRHSTG) threads the bilayer. At 335–348 (LRSLGMTITQCYEE) the chain is on the cytoplasmic side. Residues 349-369 (VGLLLLFLSVGISIFSTIEYF) form a helical membrane-spanning segment. The Selectivity filter motif lies at 395–400 (TVGYGD). Residues 410–430 (IVAFMCILSGILVLALPIAII) form a helical membrane-spanning segment. Over 431–503 (NDRFSACYFT…RSSGGDDFWF (73 aa)) the chain is Cytoplasmic.

Belongs to the potassium channel family. V (TC 1.A.1.2) subfamily. Kv8.1/KCNV1 sub-subfamily. Heteromultimer with KCNB1 and KCNB2. Interacts with KCNC4 and KCND1. As to expression, detected in brain, in neocortex, olfactory tubercle, hippocampus, dentate gyrus, piriform cortex and amygdala. Detected in Purkinje cells and granular cells of the cerebellum, in hippocampal CA4 neurons and neocortex pyramidal cells.

Its subcellular location is the cell membrane. Functionally, potassium channel subunit that does not form functional channels by itself. Modulates KCNB1 and KCNB2 channel activity by shifting the threshold for inactivation to more negative values and by slowing the rate of inactivation. Can down-regulate the channel activity of KCNB1, KCNB2, KCNC4 and KCND1, possibly by trapping them in intracellular membranes. The protein is Potassium voltage-gated channel subfamily V member 1 (Kcnv1) of Rattus norvegicus (Rat).